The primary structure comprises 131 residues: MSEIPGDLKFLKSHEWARIESNGRVTVGISDHAQGLLGDLVYVELPGVGDTVQVGNGAAVVESVKAASDVYSPVSGTVVEVNSALSDKPETINEDAYGEGWIFVVEIDDKEQLNDLLDPDDYAELLEDDEH.

One can recognise a Lipoyl-binding domain in the interval 24–106 (RVTVGISDHA…YGEGWIFVVE (83 aa)). N6-lipoyllysine is present on Lys65.

Belongs to the GcvH family. In terms of assembly, the glycine cleavage system is composed of four proteins: P, T, L and H. It depends on (R)-lipoate as a cofactor.

In terms of biological role, the glycine cleavage system catalyzes the degradation of glycine. The H protein shuttles the methylamine group of glycine from the P protein to the T protein. The chain is Glycine cleavage system H protein from Xanthomonas oryzae pv. oryzae (strain MAFF 311018).